The following is a 25-amino-acid chain: Xenoposin precursor fragment BM2 (25 aa).

Expressed by the skin glands.

Its subcellular location is the secreted. Its function is as follows. Antimicrobial peptide. The sequence is that of Xenoposin precursor fragment BM2 from Xenopus boumbaensis (Mawa clawed frog).